Reading from the N-terminus, the 502-residue chain is Premnaspirodiene oxygenase (502 aa).

Residues 2–22 traverse the membrane as a helical segment; sequence QFFSLVSIFLFLSFLFLLRKW. C440 is a heme binding site.

It belongs to the cytochrome P450 family. The cofactor is heme.

The protein localises to the membrane. The enzyme catalyses (-)-vetispiradiene + 2 reduced [NADPH--hemoprotein reductase] + 2 O2 = solavetivone + 2 oxidized [NADPH--hemoprotein reductase] + 3 H2O + 2 H(+). Involved in the biosynthesis of solavetivone, a potent antifungal phytoalexin. Catalyzes the successive and independent hydroxylations of premnaspirodiene and solavetivol. The first hydroxylation step is 3-fold more efficient than the second hydroxylation reaction. This chain is Premnaspirodiene oxygenase (CYP71D55), found in Hyoscyamus muticus (Egyptian henbane).